Reading from the N-terminus, the 1064-residue chain is Protein NLRC3 (1064 aa).

The NACHT domain occupies 138 to 459; that stretch reads RVSLTIGVAG…YCFIHLSLQE (322 aa). 144 to 151 contacts ATP; it reads GVAGVGKT. LRR repeat units follow at residues 338 to 362, 570 to 593, 632 to 662, 664 to 687, 692 to 715, 720 to 743, 748 to 771, 776 to 799, 804 to 827, 832 to 855, 860 to 883, 888 to 911, 916 to 939, 972 to 995, 1000 to 1022, and 1028 to 1051; these read LGHL…LCEL, LSEL…TLAG, LPQL…VLSG, DCRI…ALAR, NRSL…ALAD, NRTL…CVAE, NQTI…QMAD, NRSL…ALAE, NQIL…VLMR, NQTL…ALTQ, NNTL…AIAV, NHSL…ALGQ, NRTL…SVAG, NRTL…ALAN, NSSL…IFVA, and NHGL…MISE.

This sequence belongs to the NLRP family. In terms of assembly, directly interacts (via CARD) with TMEM173/STING; this interaction reduces TMEM173 trafficking to the perinuclear region in response to interferon stimulatory DNA. Also interacts, but to a lesser extent, with TBK1. Interacts with TRAF6; this interaction results in decreased TRAF6 'Lys-63'-linked polyubiquitination, but leaves 'Lys-48'-linked chains unchanged, promoting TRAF6 protein degradation. Interacts with PIK3R1/PIK3R2; this interaction disrupts the association between PIK3R1/PIK3R2 and the p110 catalytic subunit PIK3CA/PIK3CB/PIK3CD and reduces PIK3R1/PIK3R2 activation. Weakly interacts with PYCARD/ASC. Interacts with CASP1 and CASP5. As to expression, expressed in bone marrow-derived macrophages.

It is found in the cytoplasm. Its function is as follows. Negative regulator of the innate immune response. Attenuates signaling pathways activated by Toll-like receptors (TLRs) and the DNA sensor STING/TMEM173 in response to pathogen-associated molecular patterns, such as intracellular poly(dA:dT), but not poly(I:C), or in response to DNA virus infection, including that of Herpes simplex virus 1 (HSV1). May affect TLR4 signaling by acting at the level of TRAF6 ubiquitination, decreasing the activating 'Lys-63'-linked ubiquitination and leaving unchanged the degradative 'Lys-48'-linked ubiquitination. Inhibits the PI3K-AKT-mTOR pathway possibly by directly interacting with the posphatidylinositol 3-kinase regulatory subunit p85 (PIK3R1/PIK3R2) and disrupting the association between PIK3R1/PIK3R2 and the catalytic subunit p110 (PIK3CA/PIK3CB/PIK3CD) and reducing PIK3R1/PIK3R2 activation. Via its regulation of the PI3K-AKT-mTOR pathway, controls cell proliferation, predominantly in intestinal epithelial cells. May also affect NOD1- or NOD2-mediated NF-kappa-B activation. Might also affect the inflammatory response by preventing NLRP3 inflammasome formation, CASP1 cleavage and IL1B maturation. This Mus musculus (Mouse) protein is Protein NLRC3 (Nlrc3).